The sequence spans 397 residues: MHILRFSDLCAQGQARGQRVFIRADLNVPQDDAGRITEDTRIRASVPCIQMALEAGAAVMVTSHLGRPTEGEFKPEDSLAPVAQRLSELLGREVPLVADWVDGVQVAPGQVVLLENCRVNKGEKKNNPELAKKMAQLCDIYVNDAFGTAHRAEGTTYGIAEYAKVACAGPLLAAEIDAIQTALANPKRPLVAIVAGSKVSTKLTILQSLSKNVDGLVVGGGIANTFMLAAGLPIGKSLAEPDLVNEAKAVIAAMAARGAEVPIPTDVVVAKAFAADAPATVKKASEVAEDDLILDIGPETAAKLAAQLKAAGTIVWNGPVGVFEFDQFAGGTKAIAQAIAESSAFSIAGGGDTLAAIAKYGIEKDVGYISTGGGAFLEVLEGKTLPAFEILQKRAAG.

Residues 25 to 27 (DLN), R41, 64 to 67 (HLGR), R118, and R151 each bind substrate. Residues K202, E324, and 350–353 (GGDT) contribute to the ATP site.

The protein belongs to the phosphoglycerate kinase family. In terms of assembly, monomer.

It is found in the cytoplasm. The enzyme catalyses (2R)-3-phosphoglycerate + ATP = (2R)-3-phospho-glyceroyl phosphate + ADP. Its pathway is carbohydrate degradation; glycolysis; pyruvate from D-glyceraldehyde 3-phosphate: step 2/5. The polypeptide is Phosphoglycerate kinase (Acidovorax ebreus (strain TPSY) (Diaphorobacter sp. (strain TPSY))).